Reading from the N-terminus, the 113-residue chain is MQAKAVTKYVRISPTKVRPVMDLVRGKPVDRALAILRYLPHKAAREIARTIESARANATNNYDMAPDALIVKYIFADEGPAFKRIMPRARGRADRIRKRTTHITVIVDDGEEM.

The protein belongs to the universal ribosomal protein uL22 family. As to quaternary structure, part of the 50S ribosomal subunit.

Functionally, this protein binds specifically to 23S rRNA; its binding is stimulated by other ribosomal proteins, e.g. L4, L17, and L20. It is important during the early stages of 50S assembly. It makes multiple contacts with different domains of the 23S rRNA in the assembled 50S subunit and ribosome. The globular domain of the protein is located near the polypeptide exit tunnel on the outside of the subunit, while an extended beta-hairpin is found that lines the wall of the exit tunnel in the center of the 70S ribosome. In Roseiflexus sp. (strain RS-1), this protein is Large ribosomal subunit protein uL22.